The following is a 380-amino-acid chain: Kappa-type opioid receptor (380 aa).

Residues Met-1–Ala-57 lie on the Extracellular side of the membrane. N-linked (GlcNAc...) asparagine glycans are attached at residues Asn-25 and Asn-39. A helical membrane pass occupies residues Ile-58–Ile-85. The Cytoplasmic segment spans residues Arg-86–Asn-95. Residues Ile-96–Tyr-119 traverse the membrane as a helical segment. Over Leu-120–Lys-132 the chain is Extracellular. Cys-131 and Cys-210 form a disulfide bridge. Residues Ile-133–Val-154 form a helical membrane-spanning segment. Over Asp-155 to Leu-173 the chain is Cytoplasmic. Residues Lys-174–Leu-196 form a helical membrane-spanning segment. Over Gly-197–Trp-222 the chain is Extracellular. Residues Asp-223–Thr-247 form a helical membrane-spanning segment. Residues Leu-248–Arg-274 are Cytoplasmic-facing. A helical membrane pass occupies residues Leu-275–Val-296. Over Glu-297–Ser-311 the chain is Extracellular. A helical membrane pass occupies residues Tyr-312–Leu-333. The Cytoplasmic segment spans residues Asp-334–Val-380. The S-palmitoyl cysteine moiety is linked to residue Cys-345.

Belongs to the G-protein coupled receptor 1 family. In terms of assembly, interacts with NHERF1. Interacts with GABARAPL1.

It localises to the cell membrane. G-protein coupled opioid receptor that functions as a receptor for endogenous alpha-neoendorphins and dynorphins, but has low affinity for beta-endorphins. Also functions as a receptor for various synthetic opioids and for the psychoactive diterpene salvinorin A. Ligand binding causes a conformation change that triggers signaling via guanine nucleotide-binding proteins (G proteins) and modulates the activity of down-stream effectors, such as adenylate cyclase. Signaling leads to the inhibition of adenylate cyclase activity. Inhibits neurotransmitter release by reducing calcium ion currents and increasing potassium ion conductance. Plays a role in the perception of pain. Plays a role in mediating reduced physical activity upon treatment with synthetic opioids. Plays a role in the regulation of salivation in response to synthetic opioids. May play a role in arousal and regulation of autonomic and neuroendocrine functions. This is Kappa-type opioid receptor (OPRK1) from Cavia porcellus (Guinea pig).